A 976-amino-acid polypeptide reads, in one-letter code: Ephrin type-B receptor 4b (976 aa).

The N-terminal stretch at 1–23 (MDRVCWIMALSWFWMVSTGLVSA) is a signal peptide. Topologically, residues 24–541 (EEEVLMNTKL…ESPSRLMLTG (518 aa)) are extracellular. The Eph LBD domain maps to 25–204 (EEVLMNTKLE…FFKKCPAVSR (180 aa)). Disulfide bonds link C69–C186 and C103–C113. 2 Fibronectin type-III domains span residues 326 to 434 (PPSA…TSRD) and 438 to 529 (PVSG…TLPD). Residues 542–562 (VLVAIGLLILIAVVIVAVFCF) traverse the membrane as a helical segment. Over 563 to 976 (RRSTRRRDPD…LRIHGGSLRY (414 aa)) the chain is Cytoplasmic. The region spanning 613–897 (VKIEEVIGAG…IPDGPSHPLL (285 aa)) is the Protein kinase domain. ATP-binding positions include 619 to 627 (IGAGEFGEV) and K645. D738 functions as the Proton acceptor in the catalytic mechanism. The region spanning 906-970 (SHCSSVADWL…LSSVQTLRIH (65 aa)) is the SAM domain.

It belongs to the protein kinase superfamily. Tyr protein kinase family. Ephrin receptor subfamily.

Its subcellular location is the cell membrane. The enzyme catalyses L-tyrosyl-[protein] + ATP = O-phospho-L-tyrosyl-[protein] + ADP + H(+). Its function is as follows. Receptor tyrosine kinase which binds promiscuously transmembrane ephrin-B family ligands residing on adjacent cells, leading to contact-dependent bidirectional signaling into neighboring cells. The signaling pathway downstream of the receptor is referred to as forward signaling while the signaling pathway downstream of the ephrin ligand is referred to as reverse signaling. Together with its cognate ligand/functional ligand EFNB2 is involved in the regulation of cell adhesion and cell migration, and plays a central role in heart morphogenesis, angiogenesis and blood vessel remodeling and permeability. EPHB4-mediated forward signaling controls cellular repulsion and segregation from EFNB2-expressing cells. Involved in somitogenesis. This Danio rerio (Zebrafish) protein is Ephrin type-B receptor 4b.